The primary structure comprises 245 residues: Carbohydrate deacetylase (245 aa).

Residues His-59 and His-125 each contribute to the Mg(2+) site.

The protein belongs to the YdjC deacetylase family. As to quaternary structure, homodimer. Requires Mg(2+) as cofactor.

Its function is as follows. Probably catalyzes the deacetylation of acetylated carbohydrates an important step in the degradation of oligosaccharides. The protein is Carbohydrate deacetylase of Listeria monocytogenes serotype 4b (strain CLIP80459).